The primary structure comprises 317 residues: Melanocyte-stimulating hormone receptor (317 aa).

At 1 to 37 the chain is on the extracellular side; that stretch reads MPVQGSQRRLLGSLNSTPTATPHLGLAANQTGAWCLE. Asn29 carries N-linked (GlcNAc...) asparagine glycosylation. The helical transmembrane segment at 38–63 threads the bilayer; the sequence is VSIPDGLFLSLGLVSLVENVLVVTAI. Topologically, residues 64–72 are cytoplasmic; sequence AKNRNLHSP. The chain crosses the membrane as a helical span at residues 73–93; the sequence is MYCFICCLALSDLLVSGSNML. The Extracellular portion of the chain corresponds to 94–118; the sequence is ETAVTLLLEAGALAARAAVVQQLDN. A helical transmembrane segment spans residues 119-140; sequence VIDVITCSSMLSSLCFLGAIAV. Residues 141–163 are Cytoplasmic-facing; that stretch reads DRYISIFYALRYHSIVTLPRARR. Residues 164-183 form a helical membrane-spanning segment; sequence AVAAIWVASVLFSMLFIAYY. Topologically, residues 184–191 are extracellular; sequence DHAAVLLC. Residues 192 to 211 form a helical membrane-spanning segment; that stretch reads LVVFFLAMLVLMAVLYVHML. Topologically, residues 212-240 are cytoplasmic; that stretch reads ARACQHAQGIARLHKRQRPAHQGFGLKGA. Residues 241–266 traverse the membrane as a helical segment; it reads ATLTILLGIFFLCWGPFFLHLTLIVL. Residues 267-279 are Extracellular-facing; the sequence is CPQHPTCSCIFKN. A helical membrane pass occupies residues 280–300; it reads FNLFLALIICNAIIDPLIYAF. Topologically, residues 301–317 are cytoplasmic; it reads RSQELRRTLKEVLLCSW. Cys315 carries S-palmitoyl cysteine lipidation.

The protein belongs to the G-protein coupled receptor 1 family. As to quaternary structure, interacts with MGRN1, but does not undergo MGRN1-mediated ubiquitination; this interaction competes with GNAS-binding and thus inhibits agonist-induced cAMP production. Interacts with OPN3; the interaction results in a decrease in MC1R-mediated cAMP signaling and ultimately a decrease in melanin production in melanocytes.

The protein resides in the cell membrane. Its function is as follows. Receptor for MSH (alpha, beta and gamma) and ACTH. The activity of this receptor is mediated by G proteins which activate adenylate cyclase. Mediates melanogenesis, the production of eumelanin (black/brown) and phaeomelanin (red/yellow), via regulation of cAMP signaling in melanocytes. The sequence is that of Melanocyte-stimulating hormone receptor (MC1R) from Allenopithecus nigroviridis (Allen's swamp monkey).